Consider the following 248-residue polypeptide: Probable transcriptional regulatory protein FTN_1028 (248 aa).

The protein belongs to the TACO1 family.

The protein localises to the cytoplasm. The chain is Probable transcriptional regulatory protein FTN_1028 from Francisella tularensis subsp. novicida (strain U112).